The primary structure comprises 496 residues: Adenosylhomocysteinase (496 aa).

3 residues coordinate substrate: T68, D157, and E219. 220–222 serves as a coordination point for NAD(+); sequence TTT. Residues K249 and D253 each contribute to the substrate site. Residues N254, 283–288, E306, N341, 362–364, and N410 each bind NAD(+); these read GYGDVG and IGH.

The protein belongs to the adenosylhomocysteinase family. NAD(+) serves as cofactor.

The protein localises to the cytoplasm. It catalyses the reaction S-adenosyl-L-homocysteine + H2O = L-homocysteine + adenosine. It participates in amino-acid biosynthesis; L-homocysteine biosynthesis; L-homocysteine from S-adenosyl-L-homocysteine: step 1/1. In terms of biological role, may play a key role in the regulation of the intracellular concentration of adenosylhomocysteine. The chain is Adenosylhomocysteinase from Mycolicibacterium paratuberculosis (strain ATCC BAA-968 / K-10) (Mycobacterium paratuberculosis).